The sequence spans 302 residues: MMLSKKNSETLENFSEKLEVEGRSLWQDARRRFMHNRAAVASLIVLVLIALFVILAPMLSQFAYDDTDWAMMSSAPDMESGHYFGTDSSGRDLLVRVAIGGRISLMVGVAAALVAVVVGTLYGSLSGYLGGKVDSVMMRLLEILNSFPFMFFVILLVTFFGQNILLIFVAIGMVSWLDMARIVRGQTLSLKRKEFIEAAQVGGVSTSGIVIRHIVPNVLGVVVVYASLLVPSMILFESFLSFLGLGTQEPLSSWGALLSDGANSMEVSPWLLLFPAGFLVVTLFCFNFIGDGLRDALDPKDR.

Over 1 to 38 (MMLSKKNSETLENFSEKLEVEGRSLWQDARRRFMHNRA) the chain is Cytoplasmic. The chain crosses the membrane as a helical span at residues 39-59 (AVASLIVLVLIALFVILAPML). Over 60–102 (SQFAYDDTDWAMMSSAPDMESGHYFGTDSSGRDLLVRVAIGGR) the chain is Periplasmic. One can recognise an ABC transmembrane type-1 domain in the interval 101–290 (GRISLMVGVA…VTLFCFNFIG (190 aa)). A helical transmembrane segment spans residues 103–123 (ISLMVGVAAALVAVVVGTLYG). The Cytoplasmic segment spans residues 124–137 (SLSGYLGGKVDSVM). A helical membrane pass occupies residues 138–160 (MRLLEILNSFPFMFFVILLVTFF). Residues 161–163 (GQN) are Periplasmic-facing. The helical transmembrane segment at 164–183 (ILLIFVAIGMVSWLDMARIV) threads the bilayer. Topologically, residues 184-213 (RGQTLSLKRKEFIEAAQVGGVSTSGIVIRH) are cytoplasmic. The chain crosses the membrane as a helical span at residues 214–234 (IVPNVLGVVVVYASLLVPSMI). Residues 235-269 (LFESFLSFLGLGTQEPLSSWGALLSDGANSMEVSP) are Periplasmic-facing. Residues 270 to 290 (WLLLFPAGFLVVTLFCFNFIG) form a helical membrane-spanning segment. Residues 291-302 (DGLRDALDPKDR) are Cytoplasmic-facing.

This sequence belongs to the binding-protein-dependent transport system permease family. OppBC subfamily. The complex is composed of two ATP-binding proteins (OppD and OppF), two transmembrane proteins (OppB and OppC) and a solute-binding protein (OppA).

It is found in the cell inner membrane. In terms of biological role, part of the ABC transporter complex OppABCDF involved in the uptake of oligopeptides. Probably responsible for the translocation of the substrate across the membrane. The chain is Oligopeptide transport system permease protein OppC (oppC) from Escherichia coli O157:H7.